We begin with the raw amino-acid sequence, 111 residues long: Phosphoribosyl-AMP cyclohydrolase (111 aa).

Asp80 contributes to the Mg(2+) binding site. Cys81 contacts Zn(2+). Residues Asp82 and Asp84 each coordinate Mg(2+). Positions 97 and 104 each coordinate Zn(2+).

It belongs to the PRA-CH family. Homodimer. Mg(2+) serves as cofactor. It depends on Zn(2+) as a cofactor.

It localises to the cytoplasm. The enzyme catalyses 1-(5-phospho-beta-D-ribosyl)-5'-AMP + H2O = 1-(5-phospho-beta-D-ribosyl)-5-[(5-phospho-beta-D-ribosylamino)methylideneamino]imidazole-4-carboxamide. It functions in the pathway amino-acid biosynthesis; L-histidine biosynthesis; L-histidine from 5-phospho-alpha-D-ribose 1-diphosphate: step 3/9. In terms of biological role, catalyzes the hydrolysis of the adenine ring of phosphoribosyl-AMP. This chain is Phosphoribosyl-AMP cyclohydrolase, found in Mycobacterium ulcerans (strain Agy99).